The chain runs to 1823 residues: WD repeat-containing protein DDB_G0292056 (1823 aa).

The tract at residues Met-1 to Val-68 is disordered. Residues Thr-16 to Asn-61 are compositionally biased toward low complexity. WD repeat units lie at residues Gln-138–Leu-177, Ser-182–Lys-222, Ser-228–Asn-267, Val-270–Thr-310, Ile-312–Pro-354, and Gly-360–Phe-405. 9 disordered regions span residues Pro-418–Thr-461, Gln-530–Asn-562, Asn-649–Lys-687, Ile-714–Gly-778, Ile-805–Gln-840, Ile-883–Ser-940, Ser-966–Arg-996, Asn-1014–Pro-1058, and Gln-1122–Ser-1186. Composition is skewed to low complexity over residues Thr-419–Thr-432 and Leu-440–Thr-461. 2 stretches are compositionally biased toward low complexity: residues Asn-654–Asn-680 and Ser-717–Gln-748. Composition is skewed to polar residues over residues Phe-749–Ser-768 and Met-827–Gln-840. Composition is skewed to low complexity over residues Asn-885–Asn-926, Ser-966–Asn-993, Asn-1014–Asn-1041, and Ser-1127–Asn-1183. One copy of the WD 7 repeat lies at Ala-1207–Lys-1250. 3 disordered regions span residues Ser-1264–Ser-1307, Gln-1697–Asn-1725, and Pro-1764–Asn-1823. Residues Ser-1282 to Ser-1293 are compositionally biased toward low complexity. A compositionally biased stretch (polar residues) spans Met-1710–Asn-1725.

The polypeptide is WD repeat-containing protein DDB_G0292056 (Dictyostelium discoideum (Social amoeba)).